Consider the following 1642-residue polypeptide: Cobra venom factor (1642 aa).

An N-terminal signal peptide occupies residues 1-22; the sequence is MERMALYLVAALLIGFPGSSHG. N-linked (GlcNAc...) asparagine glycosylation is found at Asn153, Asn158, and Asn209. 4 residues coordinate Mg(2+): Pro516, Asp539, Val540, and Asp542. Cystine bridges form between Cys544-Cys801, Cys609-Cys644, Cys677-Cys704, Cys678-Cys711, Cys691-Cys712, Cys857-Cys1492, Cys1340-Cys1468, Cys1368-Cys1437, Cys1485-Cys1490, Cys1497-Cys1569, Cys1516-Cys1640, and Cys1616-Cys1625. A propeptide spanning residues 650 to 732 is cleaved from the precursor; sequence RRRRSSVLLL…QRESELFLAR (83 aa). The tract at residues 654–732 is C3a-like domain; the sequence is SSVLLLDSNA…QRESELFLAR (79 aa). Positions 677 to 712 constitute an Anaphylatoxin-like domain; the sequence is CCEDVMHENPMGYTCEKRAKYIQEGDACKAAFLECC. The interval 736–747 is factor B binding site; that stretch reads EDGFIADSDIIS. Residues 985 to 1263 constitute a propeptide that is removed on maturation; the sequence is HLIITPSGCG…VMAFQALAEY (279 aa). The tract at residues 985 to 1263 is C3d-like domain; the sequence is HLIITPSGCG…VMAFQALAEY (279 aa). Positions 993 to 996 form a cross-link, isoglutamyl cysteine thioester (Cys-Gln); the sequence is CGEQ. Residues 1190 to 1253 are factor H binding site; sequence VLMAASTGRD…GETYGQTQAT (64 aa). Asn1346 carries N-linked (GlcNAc...) asparagine glycosylation. Residues 1497–1640 enclose the NTR domain; that stretch reads CSSLNHQERI…FSYTLTEFGC (144 aa).

This sequence belongs to the venom complement C3 homolog family. In terms of assembly, heterotrimer of alpha, beta and gamma chains; disulfide-linked. Is active with factor B in the presence of factor D. Post-translationally, first processed by the removal of 4 Arg residues by furin-type protease, forming two chains, alpha and gamma/beta precursor, linked by a disulfide bond. Probably, the cobrin cleaves the C3a-like domain and then the C3d-like domain, generating the mature cobra venom factor (CVF). This mature CVF is composed of three chains: alpha, gamma and beta. In terms of processing, contains 3 N-linked oligosaccharide chains, two in the alpha-chain and one in the beta-chain. Glycosylation is not required for the biological activity. However, it contributes to the immunogenicity of CVF. The carbohydrate content is 7.4. The major oligosaccharide is a symmetric fucosylated biantennary complex-type chain with an unusual alpha-galactosylated Le(x) structure at its non-reducing end. Expressed by the venom gland.

It localises to the secreted. Its function is as follows. Complement-activating protein in cobra venom. It is a structural and functional analog of complement component C3b, the activated form of C3. It binds factor B (CFB), which is subsequently cleaved by factor D (CFD) to form the bimolecular complex CVF/Bb. CVF/Bb is a C3/C5 convertase that cleaves both complement components C3 and C5. Structurally, it resembles the C3b degradation product C3c, which is not able to form a C3/C5 convertase. Unlike C3b/Bb, CVF/Bb is a stable complex and completely resistant to the actions of complement regulatory factors H (CFH) and I (CFI). Therefore, CVF continuously activates complement resulting in the depletion of complement activity. The protein is Cobra venom factor of Naja kaouthia (Monocled cobra).